Here is a 343-residue protein sequence, read N- to C-terminus: MIEFLQHKEATIAREILAVQIPAYIKETEIIGFDGIPALQEKVKDIQASHERFAGYRKNGKLIGVISYEKNMHYLTICRLVVHPDGFRKGIGRALLQFVIDHNEDAEKIEVVTAENNTPAVSLYTQAGFQKAETVKAAQGLLLSVFHLYPKRKVEIILYNEKWAECFDEEKERLKLVFGPEIIAIHHIGSTSIPNMAAKPIIDMLIEVRSIEAVSQFDEQMKANGYTPKGENGIAGRRYFQKGGNKRTHHVHMYEQGNPAIERHLLFRDYLRAHPNIAKEYAVLKKQLAAQHPDSINQYIQGKDEWIKTAEENAKRWKKGRNNANGSIVCYNSENDENGGFTL.

The 137-residue stretch at 8 to 144 (KEATIAREIL…VKAAQGLLLS (137 aa)) folds into the N-acetyltransferase domain. Residues 135 to 343 (VKAAQGLLLS…ENDENGGFTL (209 aa)) are UPF0157.

It in the C-terminal section; belongs to the UPF0157 (GrpB) family.

The sequence is that of UPF0157 protein YqkA (yqkA) from Bacillus subtilis (strain 168).